The sequence spans 138 residues: Large ribosomal subunit protein uL16c (138 aa).

This sequence belongs to the universal ribosomal protein uL16 family. Part of the 50S ribosomal subunit.

It is found in the plastid. The protein resides in the chloroplast. The chain is Large ribosomal subunit protein uL16c from Phaeodactylum tricornutum (strain CCAP 1055/1).